Here is a 334-residue protein sequence, read N- to C-terminus: Beta-1,3-N-acetylglucosaminyltransferase radical fringe (334 aa).

The Cytoplasmic segment spans residues 1–6 (MSRVRR). Residues 7-29 (VLCRACLALAAVLAVLLLLPLPL) traverse the membrane as a helical; Signal-anchor for type II membrane protein segment. Residues 30–334 (PLPLPLPRAP…MKNRGKEAFQ (305 aa)) lie on the Lumenal side of the membrane. Arg-77 serves as a coordination point for substrate. Asn-116 carries N-linked (GlcNAc...) asparagine glycosylation. 2 disulfides stabilise this stretch: Cys-117–Cys-128 and Cys-146–Cys-210. Position 150 (Asp-150) interacts with substrate. Asp-151 is a Mn(2+) binding site. Asp-240 is an active-site residue. Residue His-264 coordinates Mn(2+). Cys-314 and Cys-323 are disulfide-bonded.

The protein belongs to the glycosyltransferase 31 family. It depends on Mn(2+) as a cofactor. In terms of tissue distribution, most abundantly expressed in adult brain. Expressed in most neurons of the brain but not in glial cells. Also detected to a lower extent in adult lung and kidney.

It is found in the golgi apparatus membrane. It catalyses the reaction 3-O-(alpha-L-fucosyl)-L-threonyl-[EGF-like domain protein] + UDP-N-acetyl-alpha-D-glucosamine = 3-O-(N-acetyl-beta-D-glucosaminyl-(1-&gt;3)-alpha-L-fucosyl)-L-threonyl-[EGF-like domain protein] + UDP + H(+). It carries out the reaction 3-O-(alpha-L-fucosyl)-L-seryl-[EGF-like domain protein] + UDP-N-acetyl-alpha-D-glucosamine = 3-O-(N-acetyl-beta-D-glucosaminyl-(1-&gt;3)-alpha-L-fucosyl)-L-seryl-[EGF-like domain protein] + UDP + H(+). Glycosyltransferase that initiates the elongation of O-linked fucose residues attached to EGF-like repeats in the extracellular domain of Notch molecules. Modulates NOTCH1 activity by modifying O-fucose residues at specific EGF-like domains resulting in enhancement of NOTCH1 activation by DLL1 and JAG1. Inhibits Notch signaling in postmitotic neurons of the brain. It may play a role in adult brain and in neurogenesis. It may play a role in limb development. In Rattus norvegicus (Rat), this protein is Beta-1,3-N-acetylglucosaminyltransferase radical fringe.